The chain runs to 947 residues: Microtubule cross-linking factor 3 (947 aa).

The first 21 residues, 1–21 (MSQPPIGGAAPATAAASPAAA), serve as a signal peptide directing secretion. Disordered regions lie at residues 1–251 (MSQP…SYWK), 266–368 (KERA…TLKN), and 496–524 (LSLK…DNED). Composition is skewed to low complexity over residues 9–24 (AAPA…AATE), 72–81 (QQQLQQQQQQ), and 109–137 (APKG…ALGG). The span at 141-151 (GPPEEPPRELE) shows a compositional bias: basic and acidic residues. Gly residues predominate over residues 164–180 (GEGGGGGGEGGGAGGGS). The span at 214–236 (ASPSPSSSSAGKTPGTGSRNSGS) shows a compositional bias: low complexity. The span at 237–248 (GVAGGGSGGGGS) shows a compositional bias: gly residues. 2 stretches are compositionally biased toward low complexity: residues 287–297 (SSRSSPVSGPP) and 304–325 (AVAS…AEGS). A coiled-coil region spans residues 342 to 726 (HPQQLQEQEE…GKVMQLQYEN (385 aa)). Composition is skewed to basic and acidic residues over residues 355–368 (EMEK…TLKN) and 496–513 (LSLK…EKKA). Phosphoserine is present on Ser569. The disordered stretch occupies residues 743–786 (GIRGSPRDSDAESDAGKKESDDDSRPPHRKREGPIGGESDSEEV). The span at 747-768 (SPRDSDAESDAGKKESDDDSRP) shows a compositional bias: basic and acidic residues. Residue Ser781 is modified to Phosphoserine. Residues 811 to 835 (DRQQMKDIRSEAERLGKTIDRLIAD) adopt a coiled-coil conformation. The helical transmembrane segment at 915–935 (PIILLILILVLFSSLSYTTIF) threads the bilayer.

It belongs to the MTCL family.

It is found in the membrane. This is Microtubule cross-linking factor 3 from Homo sapiens (Human).